The primary structure comprises 142 residues: Alpha-lactalbumin (142 aa).

An N-terminal signal peptide occupies residues 1–19 (MMSFVSLLLVGILFHATQA). Positions 20-142 (EQLTKCEVFR…KLDQWLCEKL (123 aa)) constitute a C-type lysozyme domain. Intrachain disulfides connect cysteine 25/cysteine 139, cysteine 47/cysteine 130, cysteine 80/cysteine 96, and cysteine 92/cysteine 110. Residues asparagine 64 and asparagine 93 are each glycosylated (N-linked (GlcNAc...) asparagine). 5 residues coordinate Ca(2+): lysine 98, aspartate 101, aspartate 103, aspartate 106, and aspartate 107.

It belongs to the glycosyl hydrolase 22 family. Lactose synthase (LS) is a heterodimer of a catalytic component, beta1,4-galactosyltransferase (beta4Gal-T1) and a regulatory component, alpha-lactalbumin (LA). Mammary gland specific. Secreted in milk.

The protein localises to the secreted. Regulatory subunit of lactose synthase, changes the substrate specificity of galactosyltransferase in the mammary gland making glucose a good acceptor substrate for this enzyme. This enables LS to synthesize lactose, the major carbohydrate component of milk. In other tissues, galactosyltransferase transfers galactose onto the N-acetylglucosamine of the oligosaccharide chains in glycoproteins. The sequence is that of Alpha-lactalbumin (LALBA) from Bos mutus grunniens (Wild yak).